We begin with the raw amino-acid sequence, 168 residues long: Pathogenesis-related protein 1A (168 aa).

An N-terminal signal peptide occupies residues 1–30; that stretch reads MGFVLFSQLPSFLLVSTLLLFLVISHSCRA. Residues 38–156 form the SCP domain; the sequence is LDAHNTARAD…NGGYVVSCNY (119 aa).

This sequence belongs to the CRISP family. In terms of processing, three disulfide bonds are present.

Its subcellular location is the vacuole. In terms of biological role, probably involved in the defense reaction of plants against pathogens. This chain is Pathogenesis-related protein 1A, found in Nicotiana tabacum (Common tobacco).